We begin with the raw amino-acid sequence, 949 residues long: Phosphocholine transferase AnkX (949 aa).

The 135-residue stretch at 155 to 289 folds into the Fido domain; that stretch reads LNPEQIPDLA…IFNTVEIIEQ (135 aa). 10 ANK repeats span residues 391–420, 424–453, 464–494, 498–527, 554–583, 588–617, 658–687, 691–720, 725–767, and 771–800; these read VGKT…DLSL, DGKT…SQED, HGKT…QINE, SGSS…DISD, LNKE…DIDI, DKAT…NTRL, NGNP…RVDF, LGNN…TLLH, ERRN…DLNK, and KGKT…HTNI.

It is found in the secreted. The protein localises to the host cytoplasm. The enzyme catalyses [Rab1 protein]-L-serine + CDP-choline = [Rab1 protein]-O-phosphocholine-L-serine + CMP + H(+). Virulence effector that plays a role in hijacking the host vesicular trafficking by recruiting the small guanosine triphosphatase (GTPase) Rab1 to the cytosolic face of the Legionella-containing vacuole (LCVs). Acts as a phosphocholine transferase by mediating the addition of phosphocholine to Ser residues of host RAB1 (RAB1A, RAB1B or RAB1C) and RAB35, leading to displacement of GDP dissociation inhibitors (GDI). Phosphocholination of target proteins also impairs accessibility to GTPase effector LepB. Can act on both GDP-bound and GTP-bound Rab proteins. The sequence is that of Phosphocholine transferase AnkX (ankX) from Legionella pneumophila subsp. pneumophila (strain Philadelphia 1 / ATCC 33152 / DSM 7513).